Here is a 233-residue protein sequence, read N- to C-terminus: Large ribosomal subunit protein uL3 (233 aa).

The protein belongs to the universal ribosomal protein uL3 family. As to quaternary structure, part of the 50S ribosomal subunit. Forms a cluster with proteins L14 and L19.

In terms of biological role, one of the primary rRNA binding proteins, it binds directly near the 3'-end of the 23S rRNA, where it nucleates assembly of the 50S subunit. This chain is Large ribosomal subunit protein uL3, found in Ureaplasma parvum serovar 3 (strain ATCC 27815 / 27 / NCTC 11736).